Reading from the N-terminus, the 547-residue chain is Puff-specific protein Bx42 (547 aa).

The interval 177-343 is SNW; it reads AQYIRYTPSQ…AREERAGLRN (167 aa). Phosphoserine is present on residues Ser227 and Ser235. Disordered regions lie at residues 333–398 and 486–547; these read RARE…ERDI and QFSG…SKRD. Basic and acidic residues-rich tracts occupy residues 358–398 and 526–539; these read EVRE…ERDI and KRAE…SSHS.

This sequence belongs to the SNW family.

The protein resides in the nucleus. In terms of biological role, may play a role in chromatin structure and function. The sequence is that of Puff-specific protein Bx42 (Bx42) from Drosophila melanogaster (Fruit fly).